The primary structure comprises 739 residues: MATGSYFPPPGAPSSISPRNSTPALSPLSPPLQQRSNALSNRLTSVLSVSYADSDIRDALETLSLRGVHNTAEVRRQLRLDVQKEVVDCNAEIVRDFGNVAEQLKRIGSVISSLKETCDEMRKHIVLAKQDTTPVLEEASALMIQKQEAETKQRLLDAFTKHFIVSEEELLALTSIEEPIDDEFFDVLARVKQVHRDCEALLGAEHERLGLELMEKSSRSLNSAYQKLYRWIQKEFKSLNLEDPQISGTIRQALRVLAERPSLFQTCLDFFAEARDYVLSDAFHYALTDAVSGGDSAVKPIEFSAHDPLRYIGDMLAWVHSTTVSEREALETLFVAEGDELAKGIQAGLNSEPWSRIDEDEEMTFDGQKALSDLVSRDLIGVARSLRQRVELVIQGHDDPVTCYKVINLLSFYQTIFSKLVGPNSNLAELLKALEKFTLNHFQTIMRDEVNNISTDHSALAPPDDLSAPQFLHDSLEVLTALMKTHEASLGTEDPSITSESEENEFTPVLHAALDPFFTLAKASADELPDPTARAIYLTNVHITTRSTISPYPFATSTHLPPLSATLSTLRVELLESQHRYLLDTSGLQVLLTALQPFSQSNESGTEKDLAAIADLPAFQAEALISTSQQLDDFLPSALMDATDNLKRVQSATFVKSVTEEAVEAFCRDFEFVEGMIIGADEARGVGQSDGAVNEEGEEGDGDGDGEVELELEVEQRGQGQSLRKLFPRTTGEIRVLLS.

Disordered stretches follow at residues 1–35 (MATG…LQQR) and 686–706 (VGQS…DGDG). The span at 693 to 706 (VNEEGEEGDGDGDG) shows a compositional bias: acidic residues.

Belongs to the COG6 family.

Its subcellular location is the golgi apparatus membrane. Its function is as follows. Acts as a component of the peripheral membrane COG complex that is involved in intra-Golgi protein trafficking. COG is located at the cis-Golgi, and regulates tethering of retrograde intra-Golgi vesicles and possibly a number of other membrane trafficking events. The chain is Conserved oligomeric Golgi complex subunit 6 (cog6) from Emericella nidulans (strain FGSC A4 / ATCC 38163 / CBS 112.46 / NRRL 194 / M139) (Aspergillus nidulans).